The primary structure comprises 201 residues: MELVLKDAQSALEVSETTFGRDFNEALVHQVVVAYAANARQGTRAQKTRAEVTGSGKKPWRQKGTGRARAGSVKGPIWRGGGVTFAAKTQDHSQKVNKKMYRGALKSILSELVRQERLVVVESFGVEAPKTKELKAKLKAMNLEDVLIVTAEVDENLFLAARNLYKVDVRDVAGLDPVSLIAFNTVLVTADAVKQIEEMLA.

Residues 45 to 72 (AQKTRAEVTGSGKKPWRQKGTGRARAGS) form a disordered region.

It belongs to the universal ribosomal protein uL4 family. As to quaternary structure, part of the 50S ribosomal subunit.

In terms of biological role, one of the primary rRNA binding proteins, this protein initially binds near the 5'-end of the 23S rRNA. It is important during the early stages of 50S assembly. It makes multiple contacts with different domains of the 23S rRNA in the assembled 50S subunit and ribosome. Functionally, forms part of the polypeptide exit tunnel. This is Large ribosomal subunit protein uL4 from Shewanella baltica (strain OS223).